A 460-amino-acid polypeptide reads, in one-letter code: Phosphoglucomutase (460 aa).

Ser-103 acts as the Phosphoserine intermediate in catalysis. Ser-103 provides a ligand contact to Mg(2+). Residues 103–104 (SH) and Lys-113 each bind substrate. Mg(2+) contacts are provided by Asp-239, Asp-241, and Asp-243. Substrate is bound by residues 243 to 244 (DR), Thr-303, and 322 to 324 (EMS).

Belongs to the phosphohexose mutase family. Mg(2+) serves as cofactor.

The protein resides in the cytoplasm. It carries out the reaction alpha-D-glucose 1-phosphate = alpha-D-glucose 6-phosphate. In terms of biological role, this enzyme participates in both the breakdown and synthesis of glucose. The chain is Phosphoglucomutase (pgm) from Neisseria meningitidis serogroup A / serotype 4A (strain DSM 15465 / Z2491).